The following is a 379-amino-acid chain: MDPTLAVGLISGTSLDGMDGALVEIAGSAQQPAVTTLATLALPYPAGLRGRLLHLAEGKPVPVAEVSALHRDVALAFADCALQLIEQAGFRCGQIACIGSHGQTVHHQPPADNAAGHTLQLGDGAWIAERTGVTTVGNFRTRDMAAGGQGAPLVPILDYLLLRDARRDRCIQNLGGIANVTYLRAGGGPEEVIAFDTGPANLLIDGTVQIALGEPFDRGGSLALQGTVDRDCLERWLADPYFRRPPPKSTGREYFGYARARRLAEESAHLPVADRVATVSELTVRSIERAYRDFLPRLPDEVFLCGGGARNGYIRARLGRLLAPARVAVSDEAGIDPDFKEAMAFALLAWLRCTGAPGNLPAVTGAGRAVPLGDVHPAG.

12-19 contacts ATP; it reads GTSLDGMD.

It belongs to the anhydro-N-acetylmuramic acid kinase family.

The enzyme catalyses 1,6-anhydro-N-acetyl-beta-muramate + ATP + H2O = N-acetyl-D-muramate 6-phosphate + ADP + H(+). It functions in the pathway amino-sugar metabolism; 1,6-anhydro-N-acetylmuramate degradation. Its pathway is cell wall biogenesis; peptidoglycan recycling. Its function is as follows. Catalyzes the specific phosphorylation of 1,6-anhydro-N-acetylmuramic acid (anhMurNAc) with the simultaneous cleavage of the 1,6-anhydro ring, generating MurNAc-6-P. Is required for the utilization of anhMurNAc either imported from the medium or derived from its own cell wall murein, and thus plays a role in cell wall recycling. The polypeptide is Anhydro-N-acetylmuramic acid kinase (Gloeobacter violaceus (strain ATCC 29082 / PCC 7421)).